A 138-amino-acid polypeptide reads, in one-letter code: Putative pre-16S rRNA nuclease (138 aa).

This sequence belongs to the YqgF nuclease family.

The protein resides in the cytoplasm. Functionally, could be a nuclease involved in processing of the 5'-end of pre-16S rRNA. This is Putative pre-16S rRNA nuclease from Cronobacter sakazakii (strain ATCC BAA-894) (Enterobacter sakazakii).